The following is a 359-amino-acid chain: Elongation factor Ts 1, mitochondrial (359 aa).

The segment covering glycine 323–lysine 341 has biased composition (low complexity). Residues glycine 323–glutamate 345 are disordered.

The protein belongs to the EF-Ts family.

The protein localises to the mitochondrion. Functionally, associates with the EF-Tu.GDP complex and induces the exchange of GDP to GTP. It remains bound to the aminoacyl-tRNA.EF-Tu.GTP complex up to the GTP hydrolysis stage on the ribosome. In Thalassiosira pseudonana (Marine diatom), this protein is Elongation factor Ts 1, mitochondrial.